The chain runs to 480 residues: Chromosomal replication initiator protein DnaA (480 aa).

Positions 1-73 are domain I, interacts with DnaA modulators; that stretch reads MNQDFWPFCL…GELGEEFHGQ (73 aa). The segment at 73 to 143 is domain II; that stretch reads QPIQLELQLP…SANELAYDKT (71 aa). A domain III, AAA+ region region spans residues 144-360; it reads RLNADFTFDT…GALNKVVAYA (217 aa). Positions 188, 190, 191, and 192 each coordinate ATP. The domain IV, binds dsDNA stretch occupies residues 361-480; sequence RFHGRGISLE…VHVLTQVLRG (120 aa).

Belongs to the DnaA family. As to quaternary structure, oligomerizes as a right-handed, spiral filament on DNA at oriC.

It is found in the cytoplasm. Plays an essential role in the initiation and regulation of chromosomal replication. ATP-DnaA binds to the origin of replication (oriC) to initiate formation of the DNA replication initiation complex once per cell cycle. Binds the DnaA box (a 9 base pair repeat at the origin) and separates the double-stranded (ds)DNA. Forms a right-handed helical filament on oriC DNA; dsDNA binds to the exterior of the filament while single-stranded (ss)DNA is stabiized in the filament's interior. The ATP-DnaA-oriC complex binds and stabilizes one strand of the AT-rich DNA unwinding element (DUE), permitting loading of DNA polymerase. After initiation quickly degrades to an ADP-DnaA complex that is not apt for DNA replication. Binds acidic phospholipids. The sequence is that of Chromosomal replication initiator protein DnaA from Azoarcus sp. (strain BH72).